Reading from the N-terminus, the 470-residue chain is 5-hydroxytryptamine receptor 2A (470 aa).

The Extracellular segment spans residues 1–80 (MDVLCEENTS…LQEKNWSALL (80 aa)). N-linked (GlcNAc...) asparagine glycosylation is found at Asn8, Asn38, Asn44, Asn51, Asn54, and Asn75. A helical transmembrane segment spans residues 81–97 (TAVVIILTIAGNILVIM). The Cytoplasmic segment spans residues 98 to 111 (AVSLEKKLQNATNY). A helical transmembrane segment spans residues 112 to 137 (FLMSLAIADMLLGFLVMPVSMLTILY). At 138 to 146 (GYRWPLPSK) the chain is on the extracellular side. A helical transmembrane segment spans residues 147-171 (LCAVWIYLDVLFSTASIMHLCAISL). Cys148 and Cys227 are disulfide-bonded. Residue Asp155 participates in serotonin binding. Positions 172 to 174 (DRY) match the DRY motif; important for ligand-induced conformation changes motif. Residues 172 to 191 (DRYVAIQNPIHHRRFNSRTK) lie on the Cytoplasmic side of the membrane. Residues 192–215 (AFLKIIAVWTISVGISMPIPVFGL) traverse the membrane as a helical segment. Residues 216 to 232 (QDDSKVFKEGSCLLADD) are Extracellular-facing. The chain crosses the membrane as a helical span at residues 233-258 (NFVLIGSFVSFFIPLTIMVITYFLTI). Residues 259-321 (KSLQKEATLC…QSISNEQKAC (63 aa)) are Cytoplasmic-facing. A Phosphoserine modification is found at Ser280. The helical transmembrane segment at 322-347 (KVLGIVFFLFVVMWCPFFITNIMAVI) threads the bilayer. Asn342 lines the serotonin pocket. Cysteines 348 and 352 form a disulfide. Topologically, residues 348-355 (CKESCNED) are extracellular. Residues 356–381 (VIGALLNVFVWIGYLSSAVNPLVYTL) form a helical membrane-spanning segment. The NPxxY motif; important for ligand-induced conformation changes and signaling signature appears at 375-379 (NPLVY). At 382–470 (FNKTYRSAFS…NTVNEKVSCV (89 aa)) the chain is on the cytoplasmic side. The disordered stretch occupies residues 448–470 (GKQHSEDAPADNSNTVNEKVSCV). The span at 458–470 (DNSNTVNEKVSCV) shows a compositional bias: polar residues. Residues 468-470 (SCV) carry the PDZ-binding motif.

The protein belongs to the G-protein coupled receptor 1 family. In terms of assembly, interacts (via C-terminus) with MPDZ and PATJ. May interact (via C-terminus) with MPP3, PRDX6, DLG4, DLG1, CASK, APBA1 and MAGI2. Interacts with GRM2 and DRD2; this may affect signaling.

It localises to the cell membrane. Its subcellular location is the cell projection. The protein resides in the dendrite. The protein localises to the axon. It is found in the cytoplasmic vesicle. It localises to the membrane. Its subcellular location is the caveola. The protein resides in the presynapse. Its activity is regulated as follows. G-protein coupled receptor activity is regulated by lipids: oleamide increases HTR2A-mediated activity. In terms of biological role, G-protein coupled receptor for 5-hydroxytryptamine (serotonin). Also functions as a receptor for various drugs and psychoactive substances, including mescaline, psilocybin, 1-(2,5-dimethoxy-4-iodophenyl)-2-aminopropane (DOI) and lysergic acid diethylamide (LSD). Ligand binding causes a conformation change that triggers signaling via guanine nucleotide-binding proteins (G proteins) and modulates the activity of downstream effectors. HTR2A is coupled to G(q)/G(11) G alpha proteins and activates phospholipase C-beta, releasing diacylglycerol (DAG) and inositol 1,4,5-trisphosphate (IP3) second messengers that modulate the activity of phosphatidylinositol 3-kinase and promote the release of Ca(2+) ions from intracellular stores, respectively. Beta-arrestin family members inhibit signaling via G proteins and mediate activation of alternative signaling pathways. Affects neural activity, perception, cognition and mood. Plays a role in the regulation of behavior, including responses to anxiogenic situations and psychoactive substances. Plays a role in intestinal smooth muscle contraction, and may play a role in arterial vasoconstriction. The protein is 5-hydroxytryptamine receptor 2A (HTR2A) of Sus scrofa (Pig).